The primary structure comprises 143 residues: Deoxyuridine 5'-triphosphate nucleotidohydrolase (143 aa).

4 residues coordinate dUMP: S65, V78, R132, and G138.

Belongs to the dUTPase family. Homotrimer. Requires Mg(2+) as cofactor.

The catalysed reaction is dUTP + H2O = dUMP + diphosphate + H(+). It participates in pyrimidine metabolism; dUMP biosynthesis; dUMP from dCTP (dUTP route): step 2/2. Its function is as follows. Involved in nucleotide metabolism via production of dUMP, the immediate precursor of thymidine nucleotides, and decreases the intracellular concentration of dUTP so that uracil cannot be incorporated into DNA. The polypeptide is Deoxyuridine 5'-triphosphate nucleotidohydrolase (DUT1) (Antonospora locustae (Microsporidian parasite)).